A 67-amino-acid polypeptide reads, in one-letter code: N-(5'-phosphoribosyl)anthranilate isomerase (67 aa).

This sequence belongs to the TrpF family.

It carries out the reaction N-(5-phospho-beta-D-ribosyl)anthranilate = 1-(2-carboxyphenylamino)-1-deoxy-D-ribulose 5-phosphate. Its pathway is amino-acid biosynthesis; L-tryptophan biosynthesis; L-tryptophan from chorismate: step 3/5. This chain is N-(5'-phosphoribosyl)anthranilate isomerase (trpF), found in Methanococcus voltae.